The chain runs to 612 residues: Elongation factor 4 (612 aa).

The tr-type G domain maps to 12-194 (SRIRNFSIIA…QIVEKVPAPS (183 aa)). GTP contacts are provided by residues 24 to 29 (DHGKST) and 141 to 144 (NKID).

Belongs to the TRAFAC class translation factor GTPase superfamily. Classic translation factor GTPase family. LepA subfamily.

It localises to the cell membrane. The enzyme catalyses GTP + H2O = GDP + phosphate + H(+). Required for accurate and efficient protein synthesis under certain stress conditions. May act as a fidelity factor of the translation reaction, by catalyzing a one-codon backward translocation of tRNAs on improperly translocated ribosomes. Back-translocation proceeds from a post-translocation (POST) complex to a pre-translocation (PRE) complex, thus giving elongation factor G a second chance to translocate the tRNAs correctly. Binds to ribosomes in a GTP-dependent manner. The protein is Elongation factor 4 of Bacillus licheniformis (strain ATCC 14580 / DSM 13 / JCM 2505 / CCUG 7422 / NBRC 12200 / NCIMB 9375 / NCTC 10341 / NRRL NRS-1264 / Gibson 46).